A 386-amino-acid chain; its full sequence is DNA replication and repair protein RecF (386 aa).

30-37 (GSNGFGKT) contributes to the ATP binding site.

Belongs to the RecF family.

The protein resides in the cytoplasm. In terms of biological role, the RecF protein is involved in DNA metabolism; it is required for DNA replication and normal SOS inducibility. RecF binds preferentially to single-stranded, linear DNA. It also seems to bind ATP. The protein is DNA replication and repair protein RecF of Mycolicibacterium vanbaalenii (strain DSM 7251 / JCM 13017 / BCRC 16820 / KCTC 9966 / NRRL B-24157 / PYR-1) (Mycobacterium vanbaalenii).